A 159-amino-acid polypeptide reads, in one-letter code: NADH-quinone oxidoreductase subunit B (159 aa).

Positions 36, 37, 102, and 132 each coordinate [4Fe-4S] cluster.

This sequence belongs to the complex I 20 kDa subunit family. NDH-1 is composed of 14 different subunits. Subunits NuoB, C, D, E, F, and G constitute the peripheral sector of the complex. [4Fe-4S] cluster is required as a cofactor.

It is found in the cell inner membrane. It carries out the reaction a quinone + NADH + 5 H(+)(in) = a quinol + NAD(+) + 4 H(+)(out). NDH-1 shuttles electrons from NADH, via FMN and iron-sulfur (Fe-S) centers, to quinones in the respiratory chain. Couples the redox reaction to proton translocation (for every two electrons transferred, four hydrogen ions are translocated across the cytoplasmic membrane), and thus conserves the redox energy in a proton gradient. The polypeptide is NADH-quinone oxidoreductase subunit B (Paracidovorax citrulli (strain AAC00-1) (Acidovorax citrulli)).